The following is a 160-amino-acid chain: Phosphopantetheine adenylyltransferase (160 aa).

Serine 9 serves as a coordination point for substrate. ATP contacts are provided by residues 9–10 (SF) and histidine 17. Lysine 41, leucine 73, and lysine 87 together coordinate substrate. Residues 88–90 (GLR), glutamate 98, and 123–129 (YSYLSSS) each bind ATP.

This sequence belongs to the bacterial CoaD family. Homohexamer. The cofactor is Mg(2+).

Its subcellular location is the cytoplasm. The enzyme catalyses (R)-4'-phosphopantetheine + ATP + H(+) = 3'-dephospho-CoA + diphosphate. Its pathway is cofactor biosynthesis; coenzyme A biosynthesis; CoA from (R)-pantothenate: step 4/5. Functionally, reversibly transfers an adenylyl group from ATP to 4'-phosphopantetheine, yielding dephospho-CoA (dPCoA) and pyrophosphate. This is Phosphopantetheine adenylyltransferase from Clostridium tetani (strain Massachusetts / E88).